The chain runs to 364 residues: Methylthioribose-1-phosphate isomerase (364 aa).

D254 (proton donor) is an active-site residue.

It belongs to the eIF-2B alpha/beta/delta subunits family. MtnA subfamily.

It localises to the cytoplasm. The protein localises to the nucleus. It carries out the reaction 5-(methylsulfanyl)-alpha-D-ribose 1-phosphate = 5-(methylsulfanyl)-D-ribulose 1-phosphate. It functions in the pathway amino-acid biosynthesis; L-methionine biosynthesis via salvage pathway; L-methionine from S-methyl-5-thio-alpha-D-ribose 1-phosphate: step 1/6. Functionally, catalyzes the interconversion of methylthioribose-1-phosphate (MTR-1-P) into methylthioribulose-1-phosphate (MTRu-1-P). The chain is Methylthioribose-1-phosphate isomerase from Drosophila simulans (Fruit fly).